Consider the following 1571-residue polypeptide: Paternally-expressed gene 3 protein (1571 aa).

Disordered regions lie at residues 1–120 (MYHH…NPIQ) and 137–241 (AEDD…QERG). 5 stretches are compositionally biased toward basic and acidic residues: residues 35 to 56 (GSERDLERRGRSRDVEPRDRWP), 80 to 99 (FGLDRDDDRRSMDYESRSQD), 169 to 186 (PEAKKPSHRRGICEDESS), 193 to 215 (KFIKDVARNPKSGRARELNERPP), and 223 to 241 (DNWKDSSSSRRESVIQERG). The segment at 199–265 (ARNPKSGRAR…DLASRSRALE (67 aa)) is 10 X 5 AA repeat of P-H-X-X-E. A 3 X 5 AA repeat of P-H-D-D-K region spans residues 199–265 (ARNPKSGRAR…DLASRSRALE (67 aa)). 4 consecutive C2H2-type zinc fingers follow at residues 325–347 (YVCDECGRQFSVISEFVEHQIMH), 378–400 (FECKECGETFSRSAALAEHRQIH), 436–458 (YECKVCKETFLHSSALIEHQKIH), and 520–542 (YECKVCGESFLHLSSLREHQKIH). A disordered region spans residues 456–495 (KIHGRGNSDDRDNERERERDRLRARAREQRERERERERER). 3 disordered regions span residues 585–649 (ALMG…LKFP), 672–713 (EAQK…TYEG), and 764–820 (REDA…AKKK). The span at 592–614 (SSEHQKNRSRRNFFEGRGFEKPF) shows a compositional bias: basic and acidic residues. 2 stretches are compositionally biased toward polar residues: residues 770–781 (GSSSSNYHTPNV) and 799–808 (DVTFSVPSSS). The segment covering 809 to 820 (VREHQKARAKKK) has biased composition (basic and acidic residues). The C2H2-type 5 zinc-finger motif lies at 850–872 (FECQECGEAFARRSELIEHQKIH). The segment at 937–1070 (FNAEEPHDKE…ESHGQEKVED (134 aa)) is disordered. Basic and acidic residues predominate over residues 940 to 1070 (EEPHDKETHG…ESHGQEKVED (131 aa)). 13 tandem repeats follow at residues 942–946 (PHDKE), 967–971 (PHGDE), 987–991 (PHDDK), 992–996 (PHGQE), 997–1001 (PHDDK), 1002–1006 (PHGQE), 1007–1011 (PHDDK), 1012–1016 (PHGQE), 1017–1021 (PHGDE), 1022–1026 (PHGQE), 1027–1031 (PHGDE), 1032–1036 (PHDKE), and 1047–1051 (PHSEE). C2H2-type zinc fingers lie at residues 1091-1113 (YECQDCGLGFTDLNDLTSHQDTH), 1147-1169 (YECPKCGESFIHSSLLFEHQRVH), 1209-1231 (IRCRQCGQGFIHSSALNEHMRQH), and 1266-1289 (FECTICGECFFTAKQLGDHHTKVH). A C2H2-type 10; degenerate zinc finger spans residues 1317-1339 (YECKDCGQSFLDDTVIAERMVFH). Residues 1373 to 1487 (NAEAAEPEVE…DQEIEVEEPY (115 aa)) form a disordered region. Composition is skewed to acidic residues over residues 1377–1397 (AEPEVEAAEPEVEAAEPEVEA), 1405–1418 (EGPDGEAAEPDGEA), and 1431–1485 (DADE…EVEE). 2 consecutive C2H2-type zinc fingers follow at residues 1488-1510 (YNCHECAETFASSSAFGEHLKSH) and 1547-1569 (FKCDVCGQLFNDRLSLARHQNSH).

The protein belongs to the krueppel C2H2-type zinc-finger protein family. Homodimer. Interacts with SIAH1A and SIAH2. Interacts with TRAF2. Brain, glial cells, neurons, skeletal muscle, uterus and placenta. In the placenta it is found in all trophoblast cells.

It is found in the nucleus. The protein localises to the cytoplasm. Its function is as follows. Induces apoptosis in cooperation with SIAH1A. Acts as a mediator between p53/TP53 and BAX in a neuronal death pathway that is activated by DNA damage. Acts synergistically with TRAF2 and inhibits TNF induced apoptosis through activation of NF-kappa-B. Plays a role in regulating maternal behavior and offspring growth. This chain is Paternally-expressed gene 3 protein (Peg3), found in Mus musculus (Mouse).